The primary structure comprises 394 residues: MAKAKFERTKPHVNVGTIGHVDHGKTTLTAAISHVLAKTYGGEAKDFSQIDNAPEERERGITINTSHIEYDTPTRHYAHVDCPGHADYVKNMITGAAQMDGAILVVAATDGPMPQTREHILLSRQVGVPFIIVFMNKCDMVDDEELLELVEMEVRELLSEYDFPGDDLPVIQGSALKALEGDAAWEGKIIELAEALDSYIPEPERAIDKAFLMPIEDVFSISGRGTVVTGRVERGIIKVGEEVEIVGIKDTTKTTCTGVEMFRKLLDEGRAGENCGILLRGTKRDEVERGQVLSKPGTIKPHTKFESEVYVLSKEEGGRHTPFFKGYRPQFYFRTTDVTGTIELPEGVEMVMPGDNIKMVVTLICPIAMDEGLRFAIREGGRTVGAGVVAKIHE.

The tr-type G domain occupies 10–204 (KPHVNVGTIG…ALDSYIPEPE (195 aa)). The G1 stretch occupies residues 19-26 (GHVDHGKT). 19–26 (GHVDHGKT) provides a ligand contact to GTP. Position 26 (Thr26) interacts with Mg(2+). Residues 60 to 64 (GITIN) are G2. The tract at residues 81-84 (DCPG) is G3. Residues 81–85 (DCPGH) and 136–139 (NKCD) each bind GTP. Positions 136 to 139 (NKCD) are G4. The interval 174–176 (SAL) is G5.

It belongs to the TRAFAC class translation factor GTPase superfamily. Classic translation factor GTPase family. EF-Tu/EF-1A subfamily. In terms of assembly, monomer.

The protein resides in the cytoplasm. It catalyses the reaction GTP + H2O = GDP + phosphate + H(+). Its function is as follows. GTP hydrolase that promotes the GTP-dependent binding of aminoacyl-tRNA to the A-site of ribosomes during protein biosynthesis. This Shewanella amazonensis (strain ATCC BAA-1098 / SB2B) protein is Elongation factor Tu.